The primary structure comprises 351 residues: Methylxanthine N1-demethylase NdmA (351 aa).

Residues 17–125 (WHPVCTVTEL…CEERYGLIWI (109 aa)) form the Rieske domain. Residues Cys62, His64, Cys81, and His84 each coordinate [2Fe-2S] cluster.

[2Fe-2S] cluster is required as a cofactor.

The catalysed reaction is caffeine + NADH + O2 + H(+) = theobromine + formaldehyde + NAD(+) + H2O. The enzyme catalyses caffeine + NADPH + O2 + H(+) = theobromine + formaldehyde + NADP(+) + H2O. It carries out the reaction theophylline + NADH + O2 + H(+) = 3-methylxanthine + formaldehyde + NAD(+) + H2O. It catalyses the reaction theophylline + NADPH + O2 + H(+) = 3-methylxanthine + formaldehyde + NADP(+) + H2O. The catalysed reaction is 1,7-dimethylxanthine + NADH + O2 + H(+) = 7-methylxanthine + formaldehyde + NAD(+) + H2O. The enzyme catalyses 1,7-dimethylxanthine + NADPH + O2 + H(+) = 7-methylxanthine + formaldehyde + NADP(+) + H2O. It functions in the pathway alkaloid degradation. In terms of biological role, involved in the caffeine degradation, which is the essential first step for assimilating the carbon and nitrogen in caffeine. Catalyzes the N1-demethylation of caffeine to produce theobromine and formaldehyde. Also catalyzes the N1-demethylation of theophylline, paraxanthine, and 1-methylxanthine to 3-methylxanthine, 7-methylxanthine, and xanthine, respectively. NADH is the preferred substrate. This is Methylxanthine N1-demethylase NdmA (ndmA) from Pseudomonas putida (Arthrobacter siderocapsulatus).